Consider the following 443-residue polypeptide: GTPase Der (443 aa).

EngA-type G domains lie at 3-168 (PLLA…PEAP) and 178-353 (VHLA…RNRS). GTP contacts are provided by residues 9-16 (GRPNVGKS), 56-60 (DTGGY), 120-123 (NKVE), 184-191 (GRPNVGKS), 231-235 (DTAGL), and 296-299 (NKWD). One can recognise a KH-like domain in the interval 354 to 438 (QNVSTSQLNK…PISLRFLHKN (85 aa)).

Belongs to the TRAFAC class TrmE-Era-EngA-EngB-Septin-like GTPase superfamily. EngA (Der) GTPase family. In terms of assembly, associates with the 50S ribosomal subunit.

Functionally, GTPase that plays an essential role in the late steps of ribosome biogenesis. The sequence is that of GTPase Der from Chlorobium chlorochromatii (strain CaD3).